A 378-amino-acid polypeptide reads, in one-letter code: Homeobox protein Meis3 (378 aa).

The interval 24–57 (FSEAAPSVPRAPGPYTPHRPPQLQAPGLDSDSLK) is disordered. The span at 32 to 43 (PRAPGPYTPHRP) shows a compositional bias: pro residues. Positions 99-182 (GGDVCSSDSF…PIDLVIEDRD (84 aa)) constitute an MEIS N-terminal domain. A disordered region spans residues 203 to 265 (NTTWIRDHED…DEDLDLERRR (63 aa)). A compositionally biased stretch (low complexity) spans 230–244 (SQSGDNSSDQGDGLD). The homeobox; TALE-type DNA-binding region spans 265–327 (RNKKRGIFPK…NARRRIVQPM (63 aa)).

This sequence belongs to the TALE/MEIS homeobox family. Expressed at high levels in the brain. Significant expression also observed in the heart, spleen and lung. Expressed in pancreatic islets (beta-cells and non-beta-cells).

It localises to the nucleus. Functionally, transcriptional regulator which directly modulates PDPK1 expression, thus promoting survival of pancreatic beta-cells. Also regulates expression of NDFIP1, BNIP3, and CCNG1. This is Homeobox protein Meis3 (Meis3) from Mus musculus (Mouse).